A 130-amino-acid polypeptide reads, in one-letter code: Small ribosomal subunit protein uS8 (130 aa).

The protein belongs to the universal ribosomal protein uS8 family. Part of the 30S ribosomal subunit. Contacts proteins S5 and S12.

In terms of biological role, one of the primary rRNA binding proteins, it binds directly to 16S rRNA central domain where it helps coordinate assembly of the platform of the 30S subunit. The protein is Small ribosomal subunit protein uS8 of Onion yellows phytoplasma (strain OY-M).